The chain runs to 298 residues: Acetylglutamate kinase (298 aa).

Substrate-binding positions include 67–68 (GG), R89, and N193.

Belongs to the acetylglutamate kinase family. ArgB subfamily.

It is found in the cytoplasm. It catalyses the reaction N-acetyl-L-glutamate + ATP = N-acetyl-L-glutamyl 5-phosphate + ADP. Its pathway is amino-acid biosynthesis; L-arginine biosynthesis; N(2)-acetyl-L-ornithine from L-glutamate: step 2/4. In terms of biological role, catalyzes the ATP-dependent phosphorylation of N-acetyl-L-glutamate. In Desulfitobacterium hafniense (strain DSM 10664 / DCB-2), this protein is Acetylglutamate kinase.